The primary structure comprises 235 residues: Small ribosomal subunit protein uS3 (235 aa).

Residues 39–107 (VRLFLRKELF…PTQINIAEIR (69 aa)) enclose the KH type-2 domain.

Belongs to the universal ribosomal protein uS3 family. In terms of assembly, part of the 30S ribosomal subunit. Forms a tight complex with proteins S10 and S14.

In terms of biological role, binds the lower part of the 30S subunit head. Binds mRNA in the 70S ribosome, positioning it for translation. The chain is Small ribosomal subunit protein uS3 from Buchnera aphidicola subsp. Baizongia pistaciae (strain Bp).